A 157-amino-acid polypeptide reads, in one-letter code: Putative pre-16S rRNA nuclease (157 aa).

It belongs to the YqgF nuclease family.

It localises to the cytoplasm. Its function is as follows. Could be a nuclease involved in processing of the 5'-end of pre-16S rRNA. This chain is Putative pre-16S rRNA nuclease, found in Parasynechococcus marenigrum (strain WH8102).